A 317-amino-acid chain; its full sequence is MQNKLKLIAIVPKISLLKNRLDQVLASLFKKHSRTILKRHILSKDVCVNGRILDQPDAKVLYKDIISINLKFKAKNDYQAENIFLNVIYEDDDILVINKQDNFVVHPGAGNTSGTLLNALLHRDSTFFNIPRAGIVHRLDKDTTGLMVIAKNNLSYMALIDQIKCKKVIREYQAIVYGKVISGGTIVKSIIRNPIKRTTMIVNKCGKRAITHYRILKRFTHHTHLKIILETGRTHQIRTHMLYINFPLVGDKTYGNKFKFYKNISLTLLEQVKKFPRQALHASRLCLYHPVTKHLMEWNSTLPRDMLNLIALLNKNI.

Positions 19–83 (NRLDQVLASL…AKNDYQAENI (65 aa)) constitute an S4 RNA-binding domain. Asp140 is a catalytic residue.

The protein belongs to the pseudouridine synthase RluA family.

It is found in the cytoplasm. The catalysed reaction is uridine(1911/1915/1917) in 23S rRNA = pseudouridine(1911/1915/1917) in 23S rRNA. Functionally, responsible for synthesis of pseudouridine from uracil at positions 1911, 1915 and 1917 in 23S ribosomal RNA. The protein is Ribosomal large subunit pseudouridine synthase D (rluD) of Buchnera aphidicola subsp. Baizongia pistaciae (strain Bp).